Here is a 350-residue protein sequence, read N- to C-terminus: Glyoxylate reductase 1 (350 aa).

Position 31 is a phosphothreonine (Thr-31). NAD(+)-binding positions include 173–174, 252–254, and Asp-278; these read RI and TAR. Arg-254 is a catalytic residue. Residue Glu-283 is part of the active site. The active-site Proton donor is the His-301. Position 301-304 (301-304) interacts with NAD(+); sequence HMGT.

This sequence belongs to the D-isomer specific 2-hydroxyacid dehydrogenase family.

It localises to the cytoplasm. It is found in the nucleus. The protein resides in the mitochondrion. It carries out the reaction glycolate + NAD(+) = glyoxylate + NADH + H(+). The catalysed reaction is glycolate + NADP(+) = glyoxylate + NADPH + H(+). It catalyses the reaction (R)-glycerate + NAD(+) = 3-hydroxypyruvate + NADH + H(+). The enzyme catalyses (R)-glycerate + NADP(+) = 3-hydroxypyruvate + NADPH + H(+). Its function is as follows. Glyoxylate reductase that reversibly reduces glyoxylate to glycolate, or alternatively hydroxypyruvate to D-glycerate, using either NADPH or NADH as a cosubstrate. Does not act as a hydroxyisocaproate dehydrogenase even though it also has minor activity on alpha-ketoisocaproate. The protein is Glyoxylate reductase 1 of Saccharomyces cerevisiae (strain ATCC 204508 / S288c) (Baker's yeast).